A 119-amino-acid chain; its full sequence is Large ribosomal subunit protein bL20 (119 aa).

Belongs to the bacterial ribosomal protein bL20 family.

In terms of biological role, binds directly to 23S ribosomal RNA and is necessary for the in vitro assembly process of the 50S ribosomal subunit. It is not involved in the protein synthesizing functions of that subunit. In Coxiella burnetii (strain CbuK_Q154) (Coxiella burnetii (strain Q154)), this protein is Large ribosomal subunit protein bL20.